We begin with the raw amino-acid sequence, 176 residues long: Probable fimbrial subunit LpfE (176 aa).

Positions 1 to 23 (MKFKRLLHSGIASLSLVACGVNA) are cleaved as a signal peptide.

It belongs to the fimbrial protein family.

Its subcellular location is the fimbrium. In terms of biological role, part of the lpfABCC'DE fimbrial operon. LP fimbriae may participate in the interaction with eukaryotic cells by assisting in microcolony formation. This chain is Probable fimbrial subunit LpfE (lpfE), found in Escherichia coli O157:H7.